Here is a 220-residue protein sequence, read N- to C-terminus: Thiopurine S-methyltransferase (220 aa).

Positions 10, 45, 66, and 123 each coordinate S-adenosyl-L-methionine.

It belongs to the class I-like SAM-binding methyltransferase superfamily. TPMT family.

The protein resides in the cytoplasm. It catalyses the reaction S-adenosyl-L-methionine + a thiopurine = S-adenosyl-L-homocysteine + a thiopurine S-methylether.. The sequence is that of Thiopurine S-methyltransferase from Nitrosomonas eutropha (strain DSM 101675 / C91 / Nm57).